The following is a 7081-amino-acid chain: Leucine-rich repeat transmembrane protein CCDC168 (7081 aa).

A helical transmembrane segment spans residues 37–57 (WVAIFFIILLGIIFEIILMKA). 2 LRR repeats span residues 233–256 (PCPL…VRNQ) and 420–445 (NAEF…SVKA). The segment at 717-745 (EDLQSSENSHLQLSNGEELPTSTPKTQRC) is disordered. Positions 718–742 (DLQSSENSHLQLSNGEELPTSTPKT) are enriched in polar residues. Residues 865-890 (ADTLRIIRLSHSASKQEKLPDEKETQ) form an LRR 3 repeat. The disordered stretch occupies residues 943–1009 (QISSGSSKAP…DPKNPLTMPE (67 aa)). Over residues 958–970 (VQPQTLSTQTILE) the composition is skewed to polar residues. Residues 981 to 999 (QVEKVKQSTDRPTDRESAG) are compositionally biased toward basic and acidic residues. Residues 1050–1075 (LPAVALGSFNNHLLTLPYFKRQEIKK) form an LRR 4 repeat. Composition is skewed to polar residues over residues 1274–1286 (KCTA…SPIS) and 1295–1304 (LNQTRESYIP). Residues 1274–1304 (KCTADSETPSPISGKSLIGDPLNQTRESYIP) form a disordered region. Residues 1501 to 1527 (NCLTLELHINGQRLQHQTGFEQTTLET) form an LRR 5 repeat. Composition is skewed to basic and acidic residues over residues 1773-1784 (ETEKDTLREKRL) and 1793-1804 (TSPHEDSITSRD). Disordered regions lie at residues 1773–1804 (ETEK…TSRD), 1954–1973 (KSPH…ESGS), 2008–2031 (STHQ…EGRS), and 2083–2103 (TGKS…NPRR). The segment covering 1964-1973 (ANLTDMESGS) has biased composition (polar residues). The LRR 6 repeat unit spans residues 2373-2397 (KNQINTIQLSERKIILNPKCLTMKE). Residues 2637 to 2680 (GRHSPASEEMKRQNGRLKMADRSSPQGRPLQAKQSAVSQSPDTA) form a disordered region. The segment covering 2668–2678 (AKQSAVSQSPD) has biased composition (polar residues). 5 LRR repeats span residues 2727–2749 (SKIH…KTRA), 2832–2855 (IQQQ…VYDS), 2862–2889 (IKKL…KLEK), 3433–3458 (LSSR…RLEW), and 3630–3653 (ILSL…NVKS). Residues 3730–3756 (SLSHSNSNSRTKAGKDKSGTLKGCLPP) form a disordered region. Residues 3875–3898 (MRGITRFCLSSSTQQELSDTMEKC) form an LRR 12 repeat. 8 disordered regions span residues 4119–4260 (ELSH…DGDK), 4293–4428 (QGII…KQET), 4729–4756 (QESL…LLPQ), 4794–4817 (SPLS…QDRT), 4831–4859 (MPSL…RLAN), 4928–4955 (GVQE…YLNC), 4966–4985 (LGKT…SDSG), and 5191–5212 (QKVK…SPLH). 6 stretches are compositionally biased toward basic and acidic residues: residues 4121–4133 (SHQK…EKAD), 4147–4176 (KAKD…DKGL), 4192–4245 (EPGK…EQQK), 4329–4361 (QKAK…DLKG), 4375–4401 (EPGK…NRDG), and 4415–4426 (EQEKRDGHKSKQ). Polar residues predominate over residues 4731-4743 (SLPSRQTAPTKPT). Composition is skewed to basic and acidic residues over residues 4746–4756 (LVKKEKQLLPQ) and 4798–4817 (KRKE…QDRT). Residues 5203-5212 (KSPSRSSPLH) show a composition bias toward polar residues. The LRR 13 repeat unit spans residues 5311 to 5336 (LSQLELDKETHLGNEMLRLKRPILRR). The tract at residues 5467 to 5496 (LPDTEKTADAEARSGDVRKGKPHRSQKENR) is disordered. A compositionally biased stretch (basic and acidic residues) spans 5469–5496 (DTEKTADAEARSGDVRKGKPHRSQKENR). An LRR 14 repeat occupies 5522 to 5545 (LNAKELVLNINKLEKKVHKDKDEA). Disordered stretches follow at residues 5564 to 5583 (LDSG…SSCP) and 5763 to 5792 (QQET…SNDR). Basic and acidic residues predominate over residues 5779 to 5792 (KFDKPKEDGQSNDR). 5 LRR repeats span residues 5901-5924 (KQAL…LFPP), 6259-6282 (PDLR…ECPS), 6419-6442 (HLES…SLQM), 6552-6575 (HFSV…SYAM), and 6613-6637 (QIDL…TFPK). 2 disordered regions span residues 6859 to 6878 (CKSH…SPDW) and 6916 to 6950 (APLT…RSDL). The span at 6860–6871 (KSHKSRKYRSSS) shows a compositional bias: basic residues. Over residues 6937-6950 (HPESQERKKARSDL) the composition is skewed to basic and acidic residues. An LRR 20 repeat occupies 7012 to 7036 (NRPFFFACVPADSLEVIPKTIRWTI).

It is found in the membrane. In Homo sapiens (Human), this protein is Leucine-rich repeat transmembrane protein CCDC168.